Reading from the N-terminus, the 287-residue chain is Spermidine/putrescine transport system permease protein PotB (287 aa).

Over 1 to 10 (MKNTSKFQNV) the chain is Cytoplasmic. Residues 11–31 (VIVTIVGWLVLFVFLPNLMII) traverse the membrane as a helical segment. Over 32 to 70 (GTSFLTRDDASFVKMVFTLDNYARLLDPLYFEVLLHSLN) the chain is Periplasmic. Residues 65 to 271 (LLHSLNMALI…IVMGLMLLIY (207 aa)) enclose the ABC transmembrane type-1 domain. The chain crosses the membrane as a helical span at residues 71-91 (MALIATLSCLVLGYPFAWFLA). Residues 92-99 (KLPEKIRP) lie on the Cytoplasmic side of the membrane. Residues 100 to 120 (LLLFLLIVPFWTNSLIRIYGL) traverse the membrane as a helical segment. The Periplasmic segment spans residues 121–145 (KIFLSTKGYLNEFLLWLGVIDTPIR). Residues 146-166 (IMFTPSAVIIGLVYILLPFMV) traverse the membrane as a helical segment. The Cytoplasmic portion of the chain corresponds to 167 to 197 (MPLYSSIEKLDKPLLEAARDLGASKMQTFIR). Residues 198–218 (IIIPLTMPGIVAGCLLVMLPA) form a helical membrane-spanning segment. Residues 219–251 (MGLFYVSDLMGGAKNLLIGNVIKVQFLNIRDWP) are Periplasmic-facing. Residues 252-272 (FGAATSITLTIVMGLMLLIYW) traverse the membrane as a helical segment. The Cytoplasmic segment spans residues 273-287 (RASRLLNKKVSDISD).

The protein belongs to the binding-protein-dependent transport system permease family. CysTW subfamily.

The protein resides in the cell inner membrane. Functionally, required for the activity of the bacterial periplasmic transport system of putrescine and spermidine. The chain is Spermidine/putrescine transport system permease protein PotB (potB) from Salmonella typhi.